The chain runs to 89 residues: Protein YxiC (89 aa).

The chain is Protein YxiC (yxiC) from Bacillus subtilis (strain 168).